A 285-amino-acid chain; its full sequence is Nucleotide-binding protein NTHI1314 (285 aa).

Residue 8 to 15 (GRSGAGKS) coordinates ATP. A GTP-binding site is contributed by 56–59 (DIRN).

The protein belongs to the RapZ-like family.

Its function is as follows. Displays ATPase and GTPase activities. The polypeptide is Nucleotide-binding protein NTHI1314 (Haemophilus influenzae (strain 86-028NP)).